The sequence spans 207 residues: dTTP/UTP pyrophosphatase (207 aa).

The active-site Proton acceptor is the D87.

Belongs to the Maf family. YhdE subfamily. A divalent metal cation serves as cofactor.

The protein resides in the cytoplasm. The enzyme catalyses dTTP + H2O = dTMP + diphosphate + H(+). It catalyses the reaction UTP + H2O = UMP + diphosphate + H(+). Its function is as follows. Nucleoside triphosphate pyrophosphatase that hydrolyzes dTTP and UTP. May have a dual role in cell division arrest and in preventing the incorporation of modified nucleotides into cellular nucleic acids. The protein is dTTP/UTP pyrophosphatase of Nitrosomonas europaea (strain ATCC 19718 / CIP 103999 / KCTC 2705 / NBRC 14298).